The sequence spans 397 residues: ATP-dependent RNA helicase eIF4A (397 aa).

The Q motif signature appears at 23-51; sequence YKFDDLNLKPNIVRGIFGYGYETPSAIQQ. Positions 54 to 224 constitute a Helicase ATP-binding domain; that stretch reads ILPITEGRDV…TKFMNNPVRI (171 aa). 67–74 lines the ATP pocket; it reads AQSGTGKT. Positions 172 to 175 match the DEAD box motif; sequence DEAD. Positions 255-396 constitute a Helicase C-terminal domain; it reads DLYDSISVTQ…EMPADIGSLF (142 aa).

This sequence belongs to the DEAD box helicase family. eIF4A subfamily. As to quaternary structure, component of the eIF4F complex, which composition varies with external and internal environmental conditions. It is composed of at least eIF4A, eIF4E and eIF4G.

It is found in the cytoplasm. It carries out the reaction ATP + H2O = ADP + phosphate + H(+). In terms of biological role, ATP-dependent RNA helicase which is a subunit of the eIF4F complex involved in cap recognition and is required for mRNA binding to ribosome. In the current model of translation initiation, eIF4A unwinds RNA secondary structures in the 5'-UTR of mRNAs which is necessary to allow efficient binding of the small ribosomal subunit, and subsequent scanning for the initiator codon. The polypeptide is ATP-dependent RNA helicase eIF4A (TIF1) (Lodderomyces elongisporus (strain ATCC 11503 / CBS 2605 / JCM 1781 / NBRC 1676 / NRRL YB-4239) (Yeast)).